Reading from the N-terminus, the 387-residue chain is 1-deoxy-D-xylulose 5-phosphate reductoisomerase (387 aa).

Residues T10, G11, I13, N38, and N122 each coordinate NADPH. K123 serves as a coordination point for 1-deoxy-D-xylulose 5-phosphate. Residue E124 coordinates NADPH. Residue D148 participates in Mn(2+) binding. Residues S149, E150, S174, and H197 each coordinate 1-deoxy-D-xylulose 5-phosphate. Mn(2+) is bound at residue E150. Position 203 (G203) interacts with NADPH. Residues S210, N215, K216, and E219 each coordinate 1-deoxy-D-xylulose 5-phosphate. Residue E219 participates in Mn(2+) binding.

This sequence belongs to the DXR family. The cofactor is Mg(2+). Mn(2+) serves as cofactor.

The catalysed reaction is 2-C-methyl-D-erythritol 4-phosphate + NADP(+) = 1-deoxy-D-xylulose 5-phosphate + NADPH + H(+). The protein operates within isoprenoid biosynthesis; isopentenyl diphosphate biosynthesis via DXP pathway; isopentenyl diphosphate from 1-deoxy-D-xylulose 5-phosphate: step 1/6. In terms of biological role, catalyzes the NADPH-dependent rearrangement and reduction of 1-deoxy-D-xylulose-5-phosphate (DXP) to 2-C-methyl-D-erythritol 4-phosphate (MEP). The sequence is that of 1-deoxy-D-xylulose 5-phosphate reductoisomerase from Ehrlichia canis (strain Jake).